Consider the following 238-residue polypeptide: Phosphoribosylaminoimidazole-succinocarboxamide synthase (238 aa).

This sequence belongs to the SAICAR synthetase family.

The enzyme catalyses 5-amino-1-(5-phospho-D-ribosyl)imidazole-4-carboxylate + L-aspartate + ATP = (2S)-2-[5-amino-1-(5-phospho-beta-D-ribosyl)imidazole-4-carboxamido]succinate + ADP + phosphate + 2 H(+). It participates in purine metabolism; IMP biosynthesis via de novo pathway; 5-amino-1-(5-phospho-D-ribosyl)imidazole-4-carboxamide from 5-amino-1-(5-phospho-D-ribosyl)imidazole-4-carboxylate: step 1/2. The protein is Phosphoribosylaminoimidazole-succinocarboxamide synthase of Nitrosococcus oceani (strain ATCC 19707 / BCRC 17464 / JCM 30415 / NCIMB 11848 / C-107).